The primary structure comprises 380 residues: Mitogen-activated protein kinase mpkC (380 aa).

The 281-residue stretch at 20–300 folds into the Protein kinase domain; that stretch reads YVNLQPIGMG…AQDALRHPYL (281 aa). Residues 26–34 and lysine 49 each bind ATP; that span reads IGMGSFGLV. Aspartate 141 (proton acceptor) is an active-site residue. Threonine 171 is modified (phosphothreonine). A TXY motif is present at residues 171–173; it reads TGY. Tyrosine 173 carries the phosphotyrosine modification.

It belongs to the protein kinase superfamily. Ser/Thr protein kinase family. MAP kinase subfamily. HOG1 sub-subfamily. Mg(2+) serves as cofactor. Post-translationally, dually phosphorylated on Thr-171 and Tyr-173, which activates the enzyme.

The catalysed reaction is L-seryl-[protein] + ATP = O-phospho-L-seryl-[protein] + ADP + H(+). It catalyses the reaction L-threonyl-[protein] + ATP = O-phospho-L-threonyl-[protein] + ADP + H(+). Activated by tyrosine and threonine phosphorylation. In terms of biological role, mitogen-activated protein kinase required for growth on media where sorbitol or mannitol is the sole carbon source. This is Mitogen-activated protein kinase mpkC (mpkC) from Aspergillus clavatus (strain ATCC 1007 / CBS 513.65 / DSM 816 / NCTC 3887 / NRRL 1 / QM 1276 / 107).